Reading from the N-terminus, the 526-residue chain is Probable 1,4-alpha-glucan branching enzyme MT3115 (526 aa).

The Nucleophile role is filled by E205. Positions 251 and 268 each coordinate substrate. D344 (proton donor) is an active-site residue. Substrate contacts are provided by W396 and D462.

Belongs to the glycosyl hydrolase 57 family.

The enzyme catalyses Transfers a segment of a (1-&gt;4)-alpha-D-glucan chain to a primary hydroxy group in a similar glucan chain.. In terms of biological role, catalyzes the formation of branch points in alpha-glucans by cleavage of an alpha-1,4 glycosidic bond and subsequent transfer of the cleaved-off oligosaccharide to a new alpha-1,6 position. Is probably involved in the biosynthesis of 6-O-methylglucosyl lipopolysaccharides (MGLP). The chain is Probable 1,4-alpha-glucan branching enzyme MT3115 from Mycobacterium tuberculosis (strain CDC 1551 / Oshkosh).